Reading from the N-terminus, the 338-residue chain is O-methyltransferase 4 (338 aa).

The S-adenosyl-L-methionine site is built by Gly-184, Asp-207, Asn-230, Phe-231, Lys-244, and Arg-245. His-248 (proton acceptor) is an active-site residue.

Belongs to the class I-like SAM-binding methyltransferase superfamily. Cation-independent O-methyltransferase family. COMT subfamily.

It carries out the reaction (3,5-dichloro-2,4,6-trihydroxyphenyl)hexan-1-one + S-adenosyl-L-methionine = 1-(3,5-dichloro-2,6-dihydroxy-4-methoxyphenyl)hexan-1-one + S-adenosyl-L-homocysteine + H(+). The sequence is that of O-methyltransferase 4 (omt4) from Dictyostelium discoideum (Social amoeba).